A 433-amino-acid chain; its full sequence is Divalent metal cation transporter MntH (433 aa).

11 consecutive transmembrane segments (helical) span residues 32 to 52 (LIFA…GNFA), 62 to 82 (GYDL…FQGL), 101 to 121 (TLPP…AMAT), 131 to 151 (IGIA…TGIV), 168 to 188 (LVIG…LLIV), 209 to 229 (ALTI…LFLH), 256 to 276 (VLAA…MAAG), 296 to 316 (SPLL…ASGV), 345 to 365 (ALTM…TRAL), 366 to 386 (VLSQ…LLWF), and 401 to 421 (ITAI…VILL).

Belongs to the NRAMP family.

It localises to the cell inner membrane. Its function is as follows. H(+)-stimulated, divalent metal cation uptake system. This Acidiphilium cryptum (strain JF-5) protein is Divalent metal cation transporter MntH.